The sequence spans 97 residues: Aspartyl/glutamyl-tRNA(Asn/Gln) amidotransferase subunit C (97 aa).

Belongs to the GatC family. Heterotrimer of A, B and C subunits.

It carries out the reaction L-glutamyl-tRNA(Gln) + L-glutamine + ATP + H2O = L-glutaminyl-tRNA(Gln) + L-glutamate + ADP + phosphate + H(+). The catalysed reaction is L-aspartyl-tRNA(Asn) + L-glutamine + ATP + H2O = L-asparaginyl-tRNA(Asn) + L-glutamate + ADP + phosphate + 2 H(+). Allows the formation of correctly charged Asn-tRNA(Asn) or Gln-tRNA(Gln) through the transamidation of misacylated Asp-tRNA(Asn) or Glu-tRNA(Gln) in organisms which lack either or both of asparaginyl-tRNA or glutaminyl-tRNA synthetases. The reaction takes place in the presence of glutamine and ATP through an activated phospho-Asp-tRNA(Asn) or phospho-Glu-tRNA(Gln). This Synechococcus sp. (strain JA-2-3B'a(2-13)) (Cyanobacteria bacterium Yellowstone B-Prime) protein is Aspartyl/glutamyl-tRNA(Asn/Gln) amidotransferase subunit C.